The primary structure comprises 233 residues: Synaptogyrin-1 (233 aa).

An N-acetylmethionine modification is found at methionine 1. The Cytoplasmic segment spans residues 1–23 (MEGGAYGAGKAGGAFDPYTLVRQ). Residues 20-173 (LVRQPHTILR…QAVLAFQRYQ (154 aa)) enclose the MARVEL domain. The helical transmembrane segment at 24 to 44 (PHTILRVVSWLFSIVVFGSIV) threads the bilayer. Residues 45–71 (NEGYLNSASEGEEFCIYNRNPNACSYG) are Lumenal-facing. A helical transmembrane segment spans residues 72–92 (VAVGVLAFLTCLLYLALDVYF). Over 93–103 (PQISSVKDRKK) the chain is Cytoplasmic. The helical transmembrane segment at 104 to 124 (AVLSDIGVSAFWAFLWFVGFC) threads the bilayer. Residues 125-148 (YLANQWQVSKPKDNPLNEGTDAAR) lie on the Lumenal side of the membrane. A helical transmembrane segment spans residues 149 to 169 (AAIAFSFFSIFTWAGQAVLAF). Residues 170 to 233 (QRYQIGADSA…EPQGYQSQGY (64 aa)) lie on the Cytoplasmic side of the membrane. The tract at residues 194–233 (MPYAPYVEPTGPDPAGMGGTYQQPANTFDTEPQGYQSQGY) is disordered. The segment covering 213-233 (TYQQPANTFDTEPQGYQSQGY) has biased composition (polar residues).

It belongs to the synaptogyrin family.

The protein resides in the cytoplasmic vesicle. It localises to the secretory vesicle. It is found in the synaptic vesicle membrane. The protein localises to the melanosome. Its function is as follows. May play a role in regulated exocytosis. Modulates the localization of synaptophysin/SYP into synaptic-like microvesicles and may therefore play a role in synaptic-like microvesicle formation and/or maturation. Involved in the regulation of short-term and long-term synaptic plasticity. The sequence is that of Synaptogyrin-1 from Homo sapiens (Human).